The chain runs to 224 residues: Synaptogyrin-2 (224 aa).

At M1 the chain carries N-acetylmethionine. At S3 the chain carries Phosphoserine. Residues 20–171 form the MARVEL domain; the sequence is FLSQPQVVTR…LASLAYQRYK (152 aa). 4 consecutive transmembrane segments (helical) span residues 31-51, 72-92, 105-125, and 147-167; these read VSMVLALIVFSCIFGEGYTNI, SAIGVLAFLASAFFLVVDAFF, VIGDLLFSALWTFLWFVGFCF, and AAITFSFFSIFSWGVLASLAY.

The protein belongs to the synaptogyrin family. May be tyrosine phosphorylated by Src.

It is found in the cytoplasmic vesicle membrane. The protein resides in the cytoplasmic vesicle. The protein localises to the secretory vesicle. It localises to the synaptic vesicle membrane. May play a role in regulated exocytosis. In neuronal cells, modulates the localization of synaptophysin/SYP into synaptic-like microvesicles and may therefore play a role in the formation and/or the maturation of this vesicles. May also play a role in GLUT4 storage and transport to the plasma membrane. The polypeptide is Synaptogyrin-2 (Mus musculus (Mouse)).